Reading from the N-terminus, the 780-residue chain is Calpain clp-1 (780 aa).

The span at 269–282 (DVDPFVRPGPDPDR) shows a compositional bias: basic and acidic residues. Residues 269–300 (DVDPFVRPGPDPDRGGGGSGPSPISPRPTTEP) form a disordered region. Positions 316–611 (LFEDPQFLAN…FEKMEICNLG (296 aa)) constitute a Calpain catalytic domain. Active-site residues include Cys371, His527, and Asn551.

It belongs to the peptidase C2 family. As to expression, expressed in muscle and neuronal tissues. Expressed in the ventral and dorsal nerve cord, intestinal and hypodermal tissues.

Its subcellular location is the cytoplasm. The protein resides in the myofibril. The protein localises to the sarcomere. It is found in the m line. In terms of biological role, calcium-regulated non-lysosomal thiol-protease which catalyzes limited proteolysis of substrates. Required for assembly and maintenance of integrin attachment complexes which are essential for maintenance of adult muscle. Proteolytic activity is activated in response to increased intracellular Ca(2+) levels during cell degeneration and promotes necrotic cell death. In Caenorhabditis elegans, this protein is Calpain clp-1.